The chain runs to 701 residues: Glycine--tRNA ligase beta subunit (701 aa).

This sequence belongs to the class-II aminoacyl-tRNA synthetase family. Tetramer of two alpha and two beta subunits.

Its subcellular location is the cytoplasm. It catalyses the reaction tRNA(Gly) + glycine + ATP = glycyl-tRNA(Gly) + AMP + diphosphate. The protein is Glycine--tRNA ligase beta subunit of Nitratidesulfovibrio vulgaris (strain DSM 19637 / Miyazaki F) (Desulfovibrio vulgaris).